A 331-amino-acid polypeptide reads, in one-letter code: HTH-type transcriptional regulator GntR (331 aa).

Residues 6 to 60 (PVLQDVADRVGVTKMTVSRFLRNPEQVSVALRGKIAAALDELGYIPNRAPDILSN) form the HTH lacI-type domain. The H-T-H motif DNA-binding region spans 8-27 (LQDVADRVGVTKMTVSRFLR).

It functions in the pathway carbohydrate acid metabolism; D-gluconate degradation [regulation]. Its function is as follows. Negative regulator for the gluconate utilization system GNT-I, the gntUKR operon. The sequence is that of HTH-type transcriptional regulator GntR (gntR) from Escherichia coli O6:H1 (strain CFT073 / ATCC 700928 / UPEC).